A 25-amino-acid polypeptide reads, in one-letter code: Growth-blocking peptide (25 aa).

The cysteines at positions 7 and 19 are disulfide-linked. Glutamine 25 carries the glutamine amide modification.

Belongs to the GBP/PSP1/paralytic peptide family. As to expression, hemolymph.

In terms of biological role, biogenic peptide that prevents, in lepidopteran, the onset of metamorphosis from larva to pupa. This growth-blocking peptide has repressive activity against juvenile hormone esterase. The sequence is that of Growth-blocking peptide from Cotesia kariyai (Parasitic wasp).